Consider the following 343-residue polypeptide: Holliday junction branch migration complex subunit RuvB (343 aa).

Residues methionine 1 to tyrosine 181 are large ATPase domain (RuvB-L). ATP-binding positions include isoleucine 20, arginine 21, glycine 62, lysine 65, threonine 66, threonine 67, glutamate 128–phenylalanine 130, arginine 171, tyrosine 181, and arginine 218. Threonine 66 contacts Mg(2+). The segment at serine 182 to lysine 252 is small ATPAse domain (RuvB-S). The segment at glutamine 255–phenylalanine 343 is head domain (RuvB-H). DNA is bound by residues arginine 291, arginine 310, and arginine 315.

The protein belongs to the RuvB family. Homohexamer. Forms an RuvA(8)-RuvB(12)-Holliday junction (HJ) complex. HJ DNA is sandwiched between 2 RuvA tetramers; dsDNA enters through RuvA and exits via RuvB. An RuvB hexamer assembles on each DNA strand where it exits the tetramer. Each RuvB hexamer is contacted by two RuvA subunits (via domain III) on 2 adjacent RuvB subunits; this complex drives branch migration. In the full resolvosome a probable DNA-RuvA(4)-RuvB(12)-RuvC(2) complex forms which resolves the HJ.

It localises to the cytoplasm. The enzyme catalyses ATP + H2O = ADP + phosphate + H(+). In terms of biological role, the RuvA-RuvB-RuvC complex processes Holliday junction (HJ) DNA during genetic recombination and DNA repair, while the RuvA-RuvB complex plays an important role in the rescue of blocked DNA replication forks via replication fork reversal (RFR). RuvA specifically binds to HJ cruciform DNA, conferring on it an open structure. The RuvB hexamer acts as an ATP-dependent pump, pulling dsDNA into and through the RuvAB complex. RuvB forms 2 homohexamers on either side of HJ DNA bound by 1 or 2 RuvA tetramers; 4 subunits per hexamer contact DNA at a time. Coordinated motions by a converter formed by DNA-disengaged RuvB subunits stimulates ATP hydrolysis and nucleotide exchange. Immobilization of the converter enables RuvB to convert the ATP-contained energy into a lever motion, pulling 2 nucleotides of DNA out of the RuvA tetramer per ATP hydrolyzed, thus driving DNA branch migration. The RuvB motors rotate together with the DNA substrate, which together with the progressing nucleotide cycle form the mechanistic basis for DNA recombination by continuous HJ branch migration. Branch migration allows RuvC to scan DNA until it finds its consensus sequence, where it cleaves and resolves cruciform DNA. The protein is Holliday junction branch migration complex subunit RuvB of Xylella fastidiosa (strain 9a5c).